The sequence spans 87 residues: Small ribosomal subunit protein bS16 (87 aa).

It belongs to the bacterial ribosomal protein bS16 family.

In Buchnera aphidicola subsp. Baizongia pistaciae (strain Bp), this protein is Small ribosomal subunit protein bS16.